Here is a 199-residue protein sequence, read N- to C-terminus: Single-stranded DNA cytosine deaminase (199 aa).

A Bipartite nuclear localization signal motif is present at residues 1 to 30 (MDSLLKKQRQFLYQFKNVRWAKGRHETYLC). The segment at 2–26 (DSLLKKQRQFLYQFKNVRWAKGRHE) is interaction with SUPT6H. The region spanning 23-130 (GRHETYLCYV…KAEPEGLRRL (108 aa)) is the CMP/dCMP-type deaminase domain. T27 is subject to Phosphothreonine; by PKA. Position 38 is a phosphoserine; by PKA (S38). The interval 39–42 (PTSF) is important for interaction with CTNNBL1. Zn(2+) is bound at residue H56. E58 acts as the Proton donor in catalysis. Residues C87 and C90 each contribute to the Zn(2+) site. The tract at residues 88–116 (YDCARHVADFLRGYPNLSLRIFTARLYFC) is required for interaction with RNF126. The Nuclear export signal motif lies at 184-199 (LYEVDDLRDAFRTLGL).

The protein belongs to the cytidine and deoxycytidylate deaminase family. Interacts with CTNNBL1; the interaction is important for the immunoglobulin switch activity of AICDA. Interacts (via its NLS) with KPNA1. Interacts with PKA/PRKACA and PRKAR1A/PKR1. Interacts with SUPT6H, TRIM28 and NCL. Directly interacts with MCM3AP; this interaction may favor AICDA recruitment to immunoglobulin variable region genes, hence promoting somatic hypermutations. The cofactor is Zn(2+). Post-translationally, ser-38 is the major site whereas Thr-27 is the minor site of phosphorylation. Phosphorylation regulates its class-switch recombination activity. Probably monoubiquitinated on several residues by RNF126. Expressed in lymph nodes, spleen and thymus.

It is found in the nucleus. The protein localises to the cytoplasm. It carries out the reaction a 2'-deoxycytidine in single-stranded DNA + H2O + H(+) = a 2'-deoxyuridine in single-stranded DNA + NH4(+). Single-stranded DNA-specific cytidine deaminase. Involved in somatic hypermutation (SHM), gene conversion, and class-switch recombination (CSR) in B-lymphocytes by deaminating C to U during transcription of Ig-variable (V) and Ig-switch (S) region DNA. Required for several crucial steps of B-cell terminal differentiation necessary for efficient antibody responses. May also play a role in the epigenetic regulation of gene expression by participating in DNA demethylation. The chain is Single-stranded DNA cytosine deaminase (AICDA) from Bos taurus (Bovine).